The primary structure comprises 364 residues: Probable G-protein coupled receptor AH9.4 (364 aa).

A topological domain (extracellular) is located at residue Met-1. The chain crosses the membrane as a helical span at residues 2–22 (AFLQSAYLVMVFTVPIAGVIL). Topologically, residues 23-48 (NTYVLRKLIRVARKSVVRFETTSGLP) are cytoplasmic. Residues 49 to 69 (LAAMSVGDSITLCALLMQAIF) traverse the membrane as a helical segment. The Extracellular segment spans residues 70-89 (HITPKGEVPTVVLSSICKFG). Residues 90 to 110 (IFLIHSTSAFSVWCWFFLSVL) form a helical membrane-spanning segment. Residues 111 to 130 (RYIAVFHPFKYRTIWRQPRN) are Cytoplasmic-facing. A helical membrane pass occupies residues 131–151 (ALKFLAGAVGMFQIYTLIFVT). At 152 to 177 (YRQEEKSCGEYDVFHESAFKHVHLLD) the chain is on the extracellular side. The helical transmembrane segment at 178–198 (IFLFYAIPSLLRITLDFLVLI) threads the bilayer. At 199–277 (HCYSPFSVEG…KKKTAMVMRS (79 aa)) the chain is on the cytoplasmic side. The chain crosses the membrane as a helical span at residues 278 to 298 (ILISVLNLLLNLPSHIFRAWA). Topologically, residues 299–315 (SYDESSLENEIVRTLEP) are extracellular. The chain crosses the membrane as a helical span at residues 316–336 (IAQMMYFSQFACNAFYLATSI). The Cytoplasmic portion of the chain corresponds to 337–364 (YETNGSPRNTVISSSNRHVSRCISDDEA).

Belongs to the G-protein coupled receptor 1 family.

Its subcellular location is the cell membrane. Its function is as follows. Not known. Putative receptor. The chain is Probable G-protein coupled receptor AH9.4 from Caenorhabditis elegans.